A 100-amino-acid polypeptide reads, in one-letter code: Mitochondrial import inner membrane translocase subunit Tim10 B (100 aa).

Residues 25-49 (CFQRCVPSLHHRALDAEEEACLHSC) carry the Twin CX3C motif motif. Disulfide bonds link C25/C49 and C29/C45.

This sequence belongs to the small Tim family. As to quaternary structure, component of the TIM22 complex, which core is composed of TIMM22, associated with TIMM10 (TIMM10A and/or TIMM10B), TIMM9, AGK and TIMM29.

The protein resides in the mitochondrion inner membrane. Functionally, component of the TIM22 complex, a complex that mediates the import and insertion of multi-pass transmembrane proteins into the mitochondrial inner membrane. The TIM22 complex forms a twin-pore translocase that uses the membrane potential as the external driving force. In the TIM22 complex, it may act as a docking point for the soluble 70 kDa complex that guides the target proteins in transit through the aqueous mitochondrial intermembrane space. This is Mitochondrial import inner membrane translocase subunit Tim10 B (Timm10b) from Mus musculus (Mouse).